A 176-amino-acid polypeptide reads, in one-letter code: Probable RNA-binding protein EIF1AD (176 aa).

An S1-like domain is found at 5–89; sequence TKKRYITNKV…VKGEIEYILD (85 aa). A compositionally biased stretch (basic and acidic residues) spans 117–128; sequence AKRGKANDKMID. Positions 117–176 are disordered; that stretch reads AKRGKANDKMIDDDMLPPSESEEEDDESEDEIEDTYDEDEETDDEEFDTYNPNRMQAPSK. Positions 129–164 are enriched in acidic residues; it reads DDMLPPSESEEEDDESEDEIEDTYDEDEETDDEEFD. Positions 166–176 are enriched in polar residues; sequence YNPNRMQAPSK.

It belongs to the EIF1AD family.

In Caenorhabditis briggsae, this protein is Probable RNA-binding protein EIF1AD.